The following is a 328-amino-acid chain: 2,4-dinitroanisole O-demethylase subunit alpha (328 aa).

Residues Met-1 to Ser-9 constitute a propeptide that is removed on maturation. Residues His-101, His-103, Asp-105, His-168, His-225, and Cys-247 each coordinate Zn(2+).

This sequence belongs to the metallo-beta-lactamase superfamily. Part of the complex DnhAB composed of the 2,4-dinitroanisole O-demethylase alpha (DnhA) and beta (DnhB) subunits. The cofactor is Zn(2+).

It catalyses the reaction 2,4-dinitroanisole + H2O = 2,4-dinitrophenol + methanol + H(+). In terms of biological role, involved in the degradation of 2,4-dinitroanisole (DNAN), an insensitive munition ingredient used in explosive formulations as a replacement for 2,4,6-trinitrotoluene (TNT). Catalyzes the removal of the methyl group from 2,4-dinitroanisole (DNAN) to yield 2,4-dinitrophenol (2,4-DNP) and methanol. In Nocardioides sp. (strain JS1661), this protein is 2,4-dinitroanisole O-demethylase subunit alpha.